A 420-amino-acid polypeptide reads, in one-letter code: MHVLSVSEINVQIKALLEATFLQVRVQGEVSNLTIHKVSGHAYFSLKDSQSVIRCVLFKGNANRLKFALKEGQEMVVFGGISVYVPRGDYQINCFEIEPKEIGSLTLALEQLKEKLRLKGYFDEANKLPKPHFPKRVAVITSQNSAAWADMKKIASKRWPMCELVCINTLMQGEGCVQSVVESIAYADSFHDTKNAFDAIVVARGGGSMEDLYSFNDEKIADALYLAKTFSMSAIGHESDFLLSDLVADLRASTPSNAMEILLPNSDEWLQRLDGFNVKLCRSFKTLLHQKKVHLEHLAASLKRLSFENKHHLNALKLEKLTIALENKTLEFLRLKKTLLEKISIQTLTSPFLQTKTERLNRLENALKLAHANLKLPQFGALVSKNNQAVELEVLKAGDKIELSNEKARASAEILSVDRV.

The protein belongs to the XseA family. As to quaternary structure, heterooligomer composed of large and small subunits.

The protein resides in the cytoplasm. The enzyme catalyses Exonucleolytic cleavage in either 5'- to 3'- or 3'- to 5'-direction to yield nucleoside 5'-phosphates.. Bidirectionally degrades single-stranded DNA into large acid-insoluble oligonucleotides, which are then degraded further into small acid-soluble oligonucleotides. The chain is Exodeoxyribonuclease 7 large subunit from Helicobacter pylori (strain G27).